A 390-amino-acid chain; its full sequence is Transforming protein cbl (390 aa).

A disordered region spans residues 1–52 (ASAGGGCRRGPSFSPGSIPSLAAERAPDPPLAMAGNVKKSSGAGGGGSGGSG). A compositionally biased stretch (gly residues) spans 42 to 52 (GAGGGGSGGSG). The tract at residues 77 to 205 (PPCTVDKKMV…KGIFPSGLFQ (129 aa)) is 4H. The 305-residue stretch at 77–381 (PPCTVDKKMV…GRNQNPDLTG (305 aa)) folds into the Cbl-PTB domain. The tract at residues 206–278 (GDTFRITKAD…FEFDIFTRLF (73 aa)) is EF-hand-like. Residues Asp259, Thr261, Asn263, Tyr265, and Glu270 each contribute to the Ca(2+) site. Residues 279 to 381 (QPWSSLLRNW…GRNQNPDLTG (103 aa)) form an SH2-like region. Arg324 is a binding site for 4-O-phospho-L-tyrosine.

Induces early B-lineage lymphomas. This is Transforming protein cbl (V-CBL) from Mus musculus (Mouse).